An 87-amino-acid chain; its full sequence is Large ribosomal subunit protein eL20 (87 aa).

Belongs to the eukaryotic ribosomal protein eL20 family. Part of the 50S ribosomal subunit. Binds 23S rRNA.

The protein is Large ribosomal subunit protein eL20 of Staphylothermus marinus (strain ATCC 43588 / DSM 3639 / JCM 9404 / F1).